We begin with the raw amino-acid sequence, 358 residues long: UDP-N-acetylglucosamine--N-acetylmuramyl-(pentapeptide) pyrophosphoryl-undecaprenol N-acetylglucosamine transferase (358 aa).

UDP-N-acetyl-alpha-D-glucosamine contacts are provided by Ser196 and Gln287.

This sequence belongs to the glycosyltransferase 28 family. MurG subfamily.

Its subcellular location is the cell membrane. The catalysed reaction is Mur2Ac(oyl-L-Ala-gamma-D-Glu-L-Lys-D-Ala-D-Ala)-di-trans,octa-cis-undecaprenyl diphosphate + UDP-N-acetyl-alpha-D-glucosamine = beta-D-GlcNAc-(1-&gt;4)-Mur2Ac(oyl-L-Ala-gamma-D-Glu-L-Lys-D-Ala-D-Ala)-di-trans,octa-cis-undecaprenyl diphosphate + UDP + H(+). Its pathway is cell wall biogenesis; peptidoglycan biosynthesis. In terms of biological role, cell wall formation. Catalyzes the transfer of a GlcNAc subunit on undecaprenyl-pyrophosphoryl-MurNAc-pentapeptide (lipid intermediate I) to form undecaprenyl-pyrophosphoryl-MurNAc-(pentapeptide)GlcNAc (lipid intermediate II). The sequence is that of UDP-N-acetylglucosamine--N-acetylmuramyl-(pentapeptide) pyrophosphoryl-undecaprenol N-acetylglucosamine transferase from Streptococcus uberis (strain ATCC BAA-854 / 0140J).